Consider the following 465-residue polypeptide: Asparagine--tRNA ligase (465 aa).

Belongs to the class-II aminoacyl-tRNA synthetase family. As to quaternary structure, homodimer.

It localises to the cytoplasm. It carries out the reaction tRNA(Asn) + L-asparagine + ATP = L-asparaginyl-tRNA(Asn) + AMP + diphosphate + H(+). The sequence is that of Asparagine--tRNA ligase from Clostridium perfringens (strain ATCC 13124 / DSM 756 / JCM 1290 / NCIMB 6125 / NCTC 8237 / Type A).